Consider the following 430-residue polypeptide: MPSSPSSTTPAPTSTPAARREPSGKGPSGAAARLFLPLIALCTAVTAANIYLAAPLLPLIAHDMGSTPSAVAWLASVAQLGYAAGLLFFAPLGDSVNRRRLVAALSLVATAALLTAAASAGTGALAGAVLVASAATVVPQLLVPLVAERAPADRRARHVAAVIAGLFTGVVAARVLGGLAGQAFGWRAVFVGAAVLTAVLGLATAYILPVERRQRRGPLFAGLVAIPGLVRRSPDLWRACVRQAGMYGAWSALWTSLALLLTEGEGYGMTTAAAGLFGLFGLAASVVAPLAGGLVDRFGAAKVVRSAYALAALSVPLFWLGGQVMAALCAAAVLVHAALVASHVANQTLALTTTSAPATANTAYVVAGFAGGALASALAGPAFGHWGWGGVCAVAGAWLVLGWTATAVRPARSARSARSARSVRSVRSAR.

The segment covering 1–17 (MPSSPSSTTPAPTSTPA) has biased composition (low complexity). The tract at residues 1–26 (MPSSPSSTTPAPTSTPAARREPSGKG) is disordered. The next 11 membrane-spanning stretches (helical) occupy residues 34–54 (LFLPLIALCTAVTAANIYLAA), 70–90 (AVAWLASVAQLGYAAGLLFFA), 101–121 (LVAALSLVATAALLTAAASAG), 126–146 (AGAVLVASAATVVPQLLVPLV), 159–179 (VAAVIAGLFTGVVAARVLGGL), 188–208 (AVFVGAAVLTAVLGLATAYIL), 244–264 (AGMYGAWSALWTSLALLLTEG), 275–295 (GLFGLFGLAASVVAPLAGGLV), 315–335 (VPLFWLGGQVMAALCAAAVLV), 362–382 (TAYVVAGFAGGALASALAGPA), and 383–403 (FGHWGWGGVCAVAGAWLVLGW).

This sequence belongs to the major facilitator superfamily.

It localises to the cell membrane. This Streptomyces coelicolor (strain ATCC BAA-471 / A3(2) / M145) protein is Probable transporter SCO4007.